The chain runs to 149 residues: Ribonuclease pancreatic (149 aa).

The first 25 residues, 1–25 (MGLEKSFILFPLLILVLGWVQSSLG), serve as a signal peptide directing secretion. Residues K32 and R35 each coordinate substrate. The active-site Proton acceptor is the H37. Intrachain disulfides connect C51/C109, C65/C120, C83/C135, and C90/C97. N59 is a glycosylation site (N-linked (GlcNAc...) asparagine). 66 to 70 (KPVNT) is a substrate binding site. An N-linked (GlcNAc...) asparagine glycan is attached at N87. 2 residues coordinate substrate: K91 and R110. H144 functions as the Proton donor in the catalytic mechanism.

The protein belongs to the pancreatic ribonuclease family. Monomer. Interacts with and forms tight 1:1 complexes with RNH1. Dimerization of two such complexes may occur. Interaction with RNH1 inhibits this protein. As to expression, pancreas.

The protein resides in the secreted. The enzyme catalyses an [RNA] containing cytidine + H2O = an [RNA]-3'-cytidine-3'-phosphate + a 5'-hydroxy-ribonucleotide-3'-[RNA].. It catalyses the reaction an [RNA] containing uridine + H2O = an [RNA]-3'-uridine-3'-phosphate + a 5'-hydroxy-ribonucleotide-3'-[RNA].. Endonuclease that catalyzes the cleavage of RNA on the 3' side of pyrimidine nucleotides. Acts on single-stranded and double-stranded RNA. The polypeptide is Ribonuclease pancreatic (RNASE1) (Abrothrix jelskii (Jelski's altiplano mouse)).